The chain runs to 205 residues: Carboxysome shell protein CsoS1D (205 aa).

BMC circularly permuted domains lie at 3–100 (ELRT…TREY) and 106–205 (VVMW…TCRS). Residues 68-69 (ER) carry the Gates the pore motif.

It belongs to the EutL/PduB family. As to quaternary structure, homotrimer. Forms a dimer of stacked trimers, the same faces interact. Probably forms a CsoS1-CsoS1D-CsoS2 complex.

The protein localises to the carboxysome. Its function is as follows. Part of the carboxysome shell, a polyhedral inclusion where RuBisCO (ribulose bisphosphate carboxylase, cbbL-cbbS) is sequestered. It may control transport of RuBisCO reactants in and out of the carboxysome. The polypeptide is Carboxysome shell protein CsoS1D (Hydrogenovibrio crunogenus (strain DSM 25203 / XCL-2) (Thiomicrospira crunogena)).